The chain runs to 272 residues: Short-chain dehydrogenase/reductase iacC (272 aa).

NADP(+)-binding residues include Ile13, Asp59, and Asn88. Catalysis depends on proton donor residues Ser150 and Tyr169. Residues Tyr169, Lys173, and Val202 each coordinate NADP(+). Lys173 serves as the catalytic Lowers pKa of active site Tyr.

This sequence belongs to the short-chain dehydrogenases/reductases (SDR) family.

It participates in secondary metabolite biosynthesis. In terms of biological role, short-chain dehydrogenase/reductase; part of the gene cluster that mediates the biosynthesis of iso-A82775C, a enylepoxycyclohexane and biosynthetic precursor of the chloropestolide anticancer natural products. Within the cluster, the prenyltransferase iacE prenylates siccayne to generate pestalodiol E, using dimethylallyl diphosphate (DMAPP) as cosubstrate. The probable oxidoreductase iacF is then involved in the epoxidation of pestalodiol F to pestalodiol F, which is further converted to pestalofone A by the short-chain dehydrogenase/reductase iacG. Iso-A82775C is subsequently generated from pestalofone A by the short-chain dehydrogenase/reductase iacC. Iso-A82775C is further condensed with maldoxin via a Diels-Alder reaction to produce the anticancer natural products chloropestolides A to E. The chain is Short-chain dehydrogenase/reductase iacC from Pestalotiopsis fici (strain W106-1 / CGMCC3.15140).